Here is a 594-residue protein sequence, read N- to C-terminus: Sucrose transport protein SUC3 (594 aa).

At S2 the chain carries N-acetylserine. Residues 2-58 (SDSVSISVPYRNLRKEIELETVTKHRQNESGSSSFSESASPSNHSDSADGESVSKNC) are Cytoplasmic-facing. The segment at 23-50 (VTKHRQNESGSSSFSESASPSNHSDSAD) is disordered. A compositionally biased stretch (low complexity) spans 31-46 (SGSSSFSESASPSNHS). A helical transmembrane segment spans residues 59–79 (SLVTLVLSCTVAAGVQFGWAL). Residues 80-98 (QLSLLTPYIQTLGISHAFS) lie on the Extracellular side of the membrane. A helical membrane pass occupies residues 99–119 (SFIWLCGPITGLVVQPFVGIW). Residues 120-131 (SDKCTSKYGRRR) lie on the Cytoplasmic side of the membrane. The chain crosses the membrane as a helical span at residues 132–152 (PFILVGSFMISIAVIIIGFSA). The Extracellular segment spans residues 153–174 (DIGYLLGDSKEHCSTFKGTRTR). Residues 175-195 (AAVVFIIGFWLLDLANNTVQG) traverse the membrane as a helical segment. Topologically, residues 196-214 (PARALLADLSGPDQRNTAN) are cytoplasmic. A helical membrane pass occupies residues 215–235 (AVFCLWMAIGNILGFSAGASG). Residues 236-257 (KWQEWFPFLTSRACCAACGNLK) are Extracellular-facing. Residues 258–278 (AAFLLAVVFLTICTLVTIYFA) form a helical membrane-spanning segment. The Cytoplasmic portion of the chain corresponds to 279-365 (KEIPFTSNKP…LTSLRHLPPA (87 aa)). The helical transmembrane segment at 366–386 (MHSVLIVMALTWLSWFPFFLF) threads the bilayer. Residues 387–417 (DTDWMGREVYHGDPTGDSLHMELYDQGVREG) are Extracellular-facing. Residues 418–438 (ALGLLLNSVVLGISSFLIEPM) form a helical membrane-spanning segment. The Cytoplasmic segment spans residues 439–445 (CQRMGAR). The helical transmembrane segment at 446 to 466 (VVWALSNFTVFACMAGTAVIS) threads the bilayer. The Extracellular segment spans residues 467–489 (LMSLSDDKNGIEYIMRGNETTRT). N484 carries an N-linked (GlcNAc...) asparagine glycan. The chain crosses the membrane as a helical span at residues 490 to 510 (AAVIVFALLGFPLAITYSVPF). Residues 511–525 (SVTAEVTADSGGGQG) lie on the Cytoplasmic side of the membrane. Residues 526–546 (LAIGVLNLAIVIPQMIVSLGA) form a helical membrane-spanning segment. Residues 547–555 (GPWDQLFGG) are Extracellular-facing. A helical membrane pass occupies residues 556 to 576 (GNLPAFVLASVAAFAAGVIAL). Residues 577–594 (QRLPTLSSSFKSTGFHIG) are Cytoplasmic-facing.

The protein belongs to the glycoside-pentoside-hexuronide (GPH) cation symporter transporter (TC 2.A.2.4) family. In terms of assembly, homodimer. Interacts with SUC2 and SUC4. Mostly localized in parenchymatic cells next to vascular tissues (at protein level). Present in stipules, trichomes, hydathodes and guard cells of source leaves, as well as in lateral root tips and flowers.

The protein localises to the cell membrane. It catalyses the reaction sucrose(out) + H(+)(out) = sucrose(in) + H(+)(in). Its pathway is glycan biosynthesis; sucrose metabolism. With respect to regulation, inhibited by protonophores (e.g. dinitrophenol and carbonyl cyanide m-chlorophenyl-hydrazone (CCCP)) and SH group inhibitors (e.g. p-chloromercuribenzene sulphonic acid (PCMBS)). Functionally, responsible for the transport of sucrose into the cell, with the concomitant uptake of protons (symport system). Can also transport maltose at a lesser rate. May also transport biotin. Probably involved in carpel maturation that leads to pod shatter and seed dispersal. This chain is Sucrose transport protein SUC3, found in Arabidopsis thaliana (Mouse-ear cress).